Here is a 275-residue protein sequence, read N- to C-terminus: Dermonecrotic toxin SpaSicTox-betaIIA2 (275 aa).

Histidine 5 is a catalytic residue. Glutamate 25 and aspartate 27 together coordinate Mg(2+). The active-site Nucleophile is histidine 41. 2 disulfide bridges follow: cysteine 45-cysteine 51 and cysteine 47-cysteine 190. Aspartate 85 serves as a coordination point for Mg(2+).

Belongs to the arthropod phospholipase D family. Class II subfamily. Mg(2+) serves as cofactor. In terms of tissue distribution, expressed by the venom gland.

Its subcellular location is the secreted. The enzyme catalyses an N-(acyl)-sphingosylphosphocholine = an N-(acyl)-sphingosyl-1,3-cyclic phosphate + choline. The catalysed reaction is an N-(acyl)-sphingosylphosphoethanolamine = an N-(acyl)-sphingosyl-1,3-cyclic phosphate + ethanolamine. It carries out the reaction a 1-acyl-sn-glycero-3-phosphocholine = a 1-acyl-sn-glycero-2,3-cyclic phosphate + choline. It catalyses the reaction a 1-acyl-sn-glycero-3-phosphoethanolamine = a 1-acyl-sn-glycero-2,3-cyclic phosphate + ethanolamine. In terms of biological role, dermonecrotic toxins cleave the phosphodiester linkage between the phosphate and headgroup of certain phospholipids (sphingolipid and lysolipid substrates), forming an alcohol (often choline) and a cyclic phosphate. This toxin acts on sphingomyelin (SM). It may also act on ceramide phosphoethanolamine (CPE), lysophosphatidylcholine (LPC) and lysophosphatidylethanolamine (LPE), but not on lysophosphatidylserine (LPS), and lysophosphatidylglycerol (LPG). It acts by transphosphatidylation, releasing exclusively cyclic phosphate products as second products. Induces dermonecrosis, hemolysis, increased vascular permeability, edema, inflammatory response, and platelet aggregation. The sequence is that of Dermonecrotic toxin SpaSicTox-betaIIA2 from Sicarius patagonicus (Six-eyed sand spider).